Reading from the N-terminus, the 438-residue chain is Coenzyme A disulfide reductase (438 aa).

8-33 is a binding site for FAD; it reads GAVAGGATCASQIRRLDKESDIIIFE. Substrate-binding residues include T15, Q19, R22, S39, and N42. Residue C43 is the Nucleophile of the active site. C43 functions as the Redox-active in the catalytic mechanism. K71 contributes to the substrate binding site. 151–166 is an NADP(+) binding site; sequence VLVVGAGYVSLEVLEN. Residue 267–277 participates in FAD binding; that stretch reads TNVPNIYAIGD. H299 contacts substrate. Residue Y419 participates in FAD binding. K427 provides a ligand contact to substrate.

This sequence belongs to the class-III pyridine nucleotide-disulfide oxidoreductase family. As to quaternary structure, homodimer. The cofactor is FAD.

It catalyses the reaction NADP(+) + 2 CoA = CoA-disulfide + NADPH + H(+). Functionally, catalyzes specifically the NADPH-dependent reduction of coenzyme A disulfide. Is also active with other disulfide substrates containing at least one 4'-phosphopantethienyl moiety such as 4,4'-diphosphopantethine, but is not able to reduce oxidized glutathione, cystine, pantethine, or H(2)O(2). This is Coenzyme A disulfide reductase (cdr) from Staphylococcus aureus (strain NCTC 8325 / PS 47).